The sequence spans 428 residues: Probable mannosyltransferase YUR1 (428 aa).

The Cytoplasmic portion of the chain corresponds to 1 to 3 (MAK). The chain crosses the membrane as a helical; Signal-anchor for type II membrane protein span at residues 4–24 (GGSLYIVGIFLPIWTFMIYIF). Residues 25–88 (GKELFLIRKY…TRQNDSDSFH (64 aa)) form a stem region region. At 25–428 (GKELFLIRKY…YFLKEEQDEI (404 aa)) the chain is on the lumenal side. Residues N77, N82, N92, and N167 are each glycosylated (N-linked (GlcNAc...) asparagine). Positions 89-428 (LRENATILML…YFLKEEQDEI (340 aa)) are catalytic. Catalysis depends on E313, which acts as the Nucleophile. An N-linked (GlcNAc...) asparagine glycan is attached at N414.

It belongs to the glycosyltransferase 15 family.

The protein resides in the golgi apparatus membrane. Its pathway is protein modification; protein glycosylation. Functionally, possible glycosyltransferase involved in N-linked glycosylation. Transfers an alpha-D-mannosyl residue from GDP-mannose into lipid-linked oligosaccharide, forming an alpha-(1-&gt;2)-D-mannosyl-D-mannose linkage. The protein is Probable mannosyltransferase YUR1 (YUR1) of Saccharomyces cerevisiae (strain ATCC 204508 / S288c) (Baker's yeast).